A 425-amino-acid polypeptide reads, in one-letter code: Tyrosine--tRNA ligase (425 aa).

Tyr37 contributes to the L-tyrosine binding site. A 'HIGH' region motif is present at residues 42 to 51 (PTADSLHLGH). Tyr174 and Gln178 together coordinate L-tyrosine. The 'KMSKS' region motif lies at 234–238 (KFGKS). An ATP-binding site is contributed by Lys237. Residues 357–422 (DGLIDALAAS…RGKKLYALLV (66 aa)) enclose the S4 RNA-binding domain.

It belongs to the class-I aminoacyl-tRNA synthetase family. TyrS type 1 subfamily. In terms of assembly, homodimer.

Its subcellular location is the cytoplasm. It carries out the reaction tRNA(Tyr) + L-tyrosine + ATP = L-tyrosyl-tRNA(Tyr) + AMP + diphosphate + H(+). Functionally, catalyzes the attachment of tyrosine to tRNA(Tyr) in a two-step reaction: tyrosine is first activated by ATP to form Tyr-AMP and then transferred to the acceptor end of tRNA(Tyr). The polypeptide is Tyrosine--tRNA ligase (Laribacter hongkongensis (strain HLHK9)).